Here is a 95-residue protein sequence, read N- to C-terminus: Aspartyl/glutamyl-tRNA(Asn/Gln) amidotransferase subunit C (95 aa).

The protein belongs to the GatC family. In terms of assembly, heterotrimer of A, B and C subunits.

The enzyme catalyses L-glutamyl-tRNA(Gln) + L-glutamine + ATP + H2O = L-glutaminyl-tRNA(Gln) + L-glutamate + ADP + phosphate + H(+). It carries out the reaction L-aspartyl-tRNA(Asn) + L-glutamine + ATP + H2O = L-asparaginyl-tRNA(Asn) + L-glutamate + ADP + phosphate + 2 H(+). Functionally, allows the formation of correctly charged Asn-tRNA(Asn) or Gln-tRNA(Gln) through the transamidation of misacylated Asp-tRNA(Asn) or Glu-tRNA(Gln) in organisms which lack either or both of asparaginyl-tRNA or glutaminyl-tRNA synthetases. The reaction takes place in the presence of glutamine and ATP through an activated phospho-Asp-tRNA(Asn) or phospho-Glu-tRNA(Gln). This Geobacter metallireducens (strain ATCC 53774 / DSM 7210 / GS-15) protein is Aspartyl/glutamyl-tRNA(Asn/Gln) amidotransferase subunit C.